The following is an 84-amino-acid chain: Translational regulator CsrA (84 aa).

The protein belongs to the CsrA/RsmA family. Homodimer; the beta-strands of each monomer intercalate to form a hydrophobic core, while the alpha-helices form wings that extend away from the core.

It localises to the cytoplasm. A translational regulator that binds mRNA to regulate translation initiation and/or mRNA stability. Usually binds in the 5'-UTR at or near the Shine-Dalgarno sequence preventing ribosome-binding, thus repressing translation. Its main target seems to be the major flagellin gene, while its function is anatagonized by FliW. This chain is Translational regulator CsrA, found in Leptospira borgpetersenii serovar Hardjo-bovis (strain JB197).